The primary structure comprises 271 residues: Ribosomal RNA small subunit methyltransferase A (271 aa).

S-adenosyl-L-methionine is bound by residues His-11, Leu-13, Gly-38, Glu-58, Asp-86, and Asn-101.

It belongs to the class I-like SAM-binding methyltransferase superfamily. rRNA adenine N(6)-methyltransferase family. RsmA subfamily.

Its subcellular location is the cytoplasm. It catalyses the reaction adenosine(1518)/adenosine(1519) in 16S rRNA + 4 S-adenosyl-L-methionine = N(6)-dimethyladenosine(1518)/N(6)-dimethyladenosine(1519) in 16S rRNA + 4 S-adenosyl-L-homocysteine + 4 H(+). In terms of biological role, specifically dimethylates two adjacent adenosines (A1518 and A1519) in the loop of a conserved hairpin near the 3'-end of 16S rRNA in the 30S particle. May play a critical role in biogenesis of 30S subunits. The chain is Ribosomal RNA small subunit methyltransferase A from Helicobacter pylori (strain Shi470).